We begin with the raw amino-acid sequence, 716 residues long: Fatty acid oxidation complex subunit alpha (716 aa).

Residues 1–189 (MIYQSPTIQV…KVGAVDAVVA (189 aa)) are enoyl-CoA hydratase/isomerase. Asp-296 is a substrate binding site. Residues 311–716 (KEVNNAAVLG…AANNGSYYQA (406 aa)) are 3-hydroxyacyl-CoA dehydrogenase. Residues Met-324, Asp-343, 400–402 (VVE), Lys-407, and Ser-429 contribute to the NAD(+) site. His-450 functions as the For 3-hydroxyacyl-CoA dehydrogenase activity in the catalytic mechanism. Asn-453 lines the NAD(+) pocket. The substrate site is built by Asn-500 and Tyr-660.

It in the N-terminal section; belongs to the enoyl-CoA hydratase/isomerase family. The protein in the C-terminal section; belongs to the 3-hydroxyacyl-CoA dehydrogenase family. Heterotetramer of two alpha chains (FadB) and two beta chains (FadA).

The enzyme catalyses a (3S)-3-hydroxyacyl-CoA + NAD(+) = a 3-oxoacyl-CoA + NADH + H(+). It catalyses the reaction a (3S)-3-hydroxyacyl-CoA = a (2E)-enoyl-CoA + H2O. The catalysed reaction is a 4-saturated-(3S)-3-hydroxyacyl-CoA = a (3E)-enoyl-CoA + H2O. It carries out the reaction (3S)-3-hydroxybutanoyl-CoA = (3R)-3-hydroxybutanoyl-CoA. The enzyme catalyses a (3Z)-enoyl-CoA = a 4-saturated (2E)-enoyl-CoA. It catalyses the reaction a (3E)-enoyl-CoA = a 4-saturated (2E)-enoyl-CoA. Its pathway is lipid metabolism; fatty acid beta-oxidation. Functionally, involved in the aerobic and anaerobic degradation of long-chain fatty acids via beta-oxidation cycle. Catalyzes the formation of 3-oxoacyl-CoA from enoyl-CoA via L-3-hydroxyacyl-CoA. It can also use D-3-hydroxyacyl-CoA and cis-3-enoyl-CoA as substrate. This chain is Fatty acid oxidation complex subunit alpha, found in Shewanella baltica (strain OS155 / ATCC BAA-1091).